Here is a 456-residue protein sequence, read N- to C-terminus: MTSSYSSSSCPLGCTMAPGARNVSVSPIDIGCQPGAEANIAPMCLLANVAHANRVRVGSTPLGRPSLCLPPTCHTACPLPGTCHIPGNIGICGAYGENTLNGHEKETMQFLNDRLANYLEKVRQLEQENAELEATLLERSKCHESTVCPDYQSYFHTIEELQQKILCSKAENARLIVQIDNAKLAADDFRIKLESERSLRQLVEADKCGTQKLLDDATLAKADLEAQQESLKEEQLSLKSNHEQEVKILRSQLGEKLRIELDIEPTIDLNRVLGEMRAQYEAMLETNRQDVEQWFQAQSEGISLQDMSCSEELQCCQSEILELRCTVNALEVERQAQHTLKDCLQNSLCEAEDRFGTELAQMQSLISNVEEQLSEIRADLERQNQEYQVLLDVKTRLENEIATYRNLLESEDCKLPCNPCSTSPSCVTAPCAPRPSCGPCTTCGPTCGASTTGSRF.

A head region spans residues 1-104; it reads MTSSYSSSSC…YGENTLNGHE (104 aa). One can recognise an IF rod domain in the interval 104–415; that stretch reads EKETMQFLND…NLLESEDCKL (312 aa). Residues 105–139 are coil 1A; that stretch reads KETMQFLNDRLANYLEKVRQLEQENAELEATLLER. Positions 140–150 are linker 1; that stretch reads SKCHESTVCPD. The interval 151 to 251 is coil 1B; sequence YQSYFHTIEE…HEQEVKILRS (101 aa). The segment at 252 to 267 is linker 12; sequence QLGEKLRIELDIEPTI. The segment at 268–411 is coil 2; that stretch reads DLNRVLGEMR…ATYRNLLESE (144 aa). Positions 412-456 are tail; sequence DCKLPCNPCSTSPSCVTAPCAPRPSCGPCTTCGPTCGASTTGSRF.

The protein belongs to the intermediate filament family.

The polypeptide is Keratin, type I cuticular Ha8 (KRT38) (Homo sapiens (Human)).